A 471-amino-acid polypeptide reads, in one-letter code: MAPKKKGTKKESKKDAVATGDIEGASVEELNQKIGTLEKEKNKEEEYRNYMQLERDKINAFWEITKKDLEDRRAELRNKDREMEEMEERHQVEIKVYKQKVKHLLYEHQNNITTLKSDGELALKLQQDEYRKREGDLGKDKRNLKLELKEQELAHQDIIRQLKLEHAKEITKLRQEFEQQAKDLQSKYEKKMKMLRDDMELRRKQEIHEIEERKNTHINELMKKHERAFAEIKNYYNDITHNNLDLIKTLKEDVAEMKRREAANEKLMYEIAQDNKKLSEPLSRALKEVELLRQQLANYDKDKLSLAQTKARLLNAERQIKNLEWENEVLSQRFSKVQTERDELYGKFEASIYDVQQKTGLKSALLEKKVEALGEALEMKEAQLAEVLTAANLDPGTLAAINQRLEEVLDNKNQIIKALQYDVAKVSKAHNDLIRVYEAKLTEFGIPVDELGFRPLVTNTSTGPAGLVVGA.

A disordered region spans residues 1-24 (MAPKKKGTKKESKKDAVATGDIEG). Coiled coils occupy residues 23–239 (EGAS…YNDI) and 282–425 (LSRA…DVAK).

Belongs to the DRC4 family. Component of the nexin-dynein regulatory complex (N-DRC). Interacts with DRC1, DRC2 and DRC5.

Its subcellular location is the cytoplasm. The protein resides in the cytoskeleton. It localises to the flagellum axoneme. The protein localises to the flagellum basal body. Component of the nexin-dynein regulatory complex (N-DRC), a key regulator of ciliary/flagellar motility which maintains the alignment and integrity of the distal axoneme and regulates microtubule sliding in motile axonemes. Plays an important role in the assembly of the N-DRC linker. This Chlamydomonas reinhardtii (Chlamydomonas smithii) protein is Dynein regulatory complex subunit 4.